We begin with the raw amino-acid sequence, 216 residues long: Elongation factor Ts (216 aa).

Residues 80-83 are involved in Mg(2+) ion dislocation from EF-Tu; sequence TDFV.

The protein belongs to the EF-Ts family.

The protein resides in the cytoplasm. Functionally, associates with the EF-Tu.GDP complex and induces the exchange of GDP to GTP. It remains bound to the aminoacyl-tRNA.EF-Tu.GTP complex up to the GTP hydrolysis stage on the ribosome. In Alkaliphilus oremlandii (strain OhILAs) (Clostridium oremlandii (strain OhILAs)), this protein is Elongation factor Ts.